The chain runs to 189 residues: Elongation factor P (189 aa).

Lys34 bears the N6-(3,6-diaminohexanoyl)-5-hydroxylysine mark.

The protein belongs to the elongation factor P family. May be beta-lysylated on the epsilon-amino group of Lys-34 by the combined action of EpmA and EpmB, and then hydroxylated on the C5 position of the same residue by EpmC (if this protein is present). Lysylation is critical for the stimulatory effect of EF-P on peptide-bond formation. The lysylation moiety may extend toward the peptidyltransferase center and stabilize the terminal 3-CCA end of the tRNA. Hydroxylation of the C5 position on Lys-34 may allow additional potential stabilizing hydrogen-bond interactions with the P-tRNA.

Its subcellular location is the cytoplasm. Its pathway is protein biosynthesis; polypeptide chain elongation. Its function is as follows. Involved in peptide bond synthesis. Alleviates ribosome stalling that occurs when 3 or more consecutive Pro residues or the sequence PPG is present in a protein, possibly by augmenting the peptidyl transferase activity of the ribosome. Modification of Lys-34 is required for alleviation. In Idiomarina loihiensis (strain ATCC BAA-735 / DSM 15497 / L2-TR), this protein is Elongation factor P.